The primary structure comprises 45 residues: uncharacterized protein (45 aa).

The span at methionine 1–isoleucine 26 shows a compositional bias: basic and acidic residues. A disordered region spans residues methionine 1–serine 45.

This is an uncharacterized protein from Bacillus subtilis (strain 168).